A 444-amino-acid polypeptide reads, in one-letter code: Argininosuccinate synthase (444 aa).

ATP contacts are provided by residues 18 to 26 (AFSGGLDTS) and Ala-44. An L-citrulline-binding site is contributed by Tyr-100. ATP contacts are provided by Gly-130 and Thr-132. L-aspartate contacts are provided by Thr-132, Asn-136, and Asp-137. Asn-136 contacts L-citrulline. Residue Asp-137 coordinates ATP. 2 residues coordinate L-citrulline: Arg-140 and Ser-193. Position 195 (Asp-195) interacts with ATP. The L-citrulline site is built by Thr-202, Glu-204, and Glu-281.

It belongs to the argininosuccinate synthase family. Type 2 subfamily. In terms of assembly, homotetramer.

Its subcellular location is the cytoplasm. The enzyme catalyses L-citrulline + L-aspartate + ATP = 2-(N(omega)-L-arginino)succinate + AMP + diphosphate + H(+). Its pathway is amino-acid biosynthesis; L-arginine biosynthesis; L-arginine from L-ornithine and carbamoyl phosphate: step 2/3. The chain is Argininosuccinate synthase from Actinobacillus succinogenes (strain ATCC 55618 / DSM 22257 / CCUG 43843 / 130Z).